We begin with the raw amino-acid sequence, 554 residues long: Probable oligo-1,6-glucosidase 3 (554 aa).

Aspartate 199 functions as the Nucleophile in the catalytic mechanism. The active-site Proton donor is the glutamate 256.

The protein belongs to the glycosyl hydrolase 13 family.

It localises to the cytoplasm. It catalyses the reaction Hydrolysis of (1-&gt;6)-alpha-D-glucosidic linkages in some oligosaccharides produced from starch and glycogen by alpha-amylase, and in isomaltose.. This Bacillus subtilis (strain 168) protein is Probable oligo-1,6-glucosidase 3 (yugT).